The following is a 367-amino-acid chain: tRNA/tmRNA (uracil-C(5))-methyltransferase (367 aa).

Residues Q190, Y218, N223, E239, and D299 each coordinate S-adenosyl-L-methionine. Catalysis depends on C324, which acts as the Nucleophile. E358 (proton acceptor) is an active-site residue.

It belongs to the class I-like SAM-binding methyltransferase superfamily. RNA M5U methyltransferase family. TrmA subfamily.

It catalyses the reaction uridine(54) in tRNA + S-adenosyl-L-methionine = 5-methyluridine(54) in tRNA + S-adenosyl-L-homocysteine + H(+). The catalysed reaction is uridine(341) in tmRNA + S-adenosyl-L-methionine = 5-methyluridine(341) in tmRNA + S-adenosyl-L-homocysteine + H(+). In terms of biological role, dual-specificity methyltransferase that catalyzes the formation of 5-methyluridine at position 54 (m5U54) in all tRNAs, and that of position 341 (m5U341) in tmRNA (transfer-mRNA). The polypeptide is tRNA/tmRNA (uracil-C(5))-methyltransferase (Yersinia enterocolitica serotype O:8 / biotype 1B (strain NCTC 13174 / 8081)).